The primary structure comprises 490 residues: Dual specificity protein kinase CLK3 (490 aa).

A Phosphotyrosine modification is found at Tyr-7. A phosphoserine mark is found at Ser-9, Ser-49, Ser-51, Ser-67, Ser-76, and Ser-78. Residues 22–138 form a disordered region; sequence RRRSYSREHE…SKRSSRSVED (117 aa). Composition is skewed to basic and acidic residues over residues 26-56 and 63-76; these read YSREHEGRLRYPSRREPPPRRSRSRSHDRLP and EHRDSDTYRCEDRS. The segment covering 103–116 has biased composition (basic residues); the sequence is TRKHAHHCHKRRTR. Over residues 117 to 130 the composition is skewed to low complexity; it reads SCSSASSRSQQSSK. Ser-135 carries the post-translational modification Phosphoserine. One can recognise a Protein kinase domain in the interval 156–472; the sequence is YEIVGNLGEG…LAEALLHPFF (317 aa). ATP-binding positions include 162-170 and Lys-186; that span reads LGEGTFGKV. The Proton acceptor role is filled by Asp-283.

Belongs to the protein kinase superfamily. CMGC Ser/Thr protein kinase family. Lammer subfamily. Autophosphorylates on all three types of residues.

The protein localises to the nucleus. It is found in the cytoplasm. It localises to the cytoplasmic vesicle. The protein resides in the secretory vesicle. Its subcellular location is the acrosome. It catalyses the reaction L-seryl-[protein] + ATP = O-phospho-L-seryl-[protein] + ADP + H(+). It carries out the reaction L-threonyl-[protein] + ATP = O-phospho-L-threonyl-[protein] + ADP + H(+). The enzyme catalyses L-tyrosyl-[protein] + ATP = O-phospho-L-tyrosyl-[protein] + ADP + H(+). Its activity is regulated as follows. Leucettine L41 inhibits its kinase activity and affects the regulation of alternative splicing mediated by phosphorylation of SR proteins. Its function is as follows. Dual specificity kinase acting on both serine/threonine and tyrosine-containing substrates. Phosphorylates serine- and arginine-rich (SR) proteins of the spliceosomal complex. May be a constituent of a network of regulatory mechanisms that enable SR proteins to control RNA splicing and can cause redistribution of SR proteins from speckles to a diffuse nucleoplasmic distribution. Phosphorylates SRSF1 and SRSF3. Regulates the alternative splicing of tissue factor (F3) pre-mRNA in endothelial cells. The polypeptide is Dual specificity protein kinase CLK3 (CLK3) (Bos taurus (Bovine)).